The primary structure comprises 260 residues: Type II methyltransferase M.CviBI (260 aa).

S-adenosyl-L-methionine is bound by residues Trp-7, Lys-11, Asp-54, and Asp-177.

Belongs to the N(4)/N(6)-methyltransferase family.

The catalysed reaction is a 2'-deoxyadenosine in DNA + S-adenosyl-L-methionine = an N(6)-methyl-2'-deoxyadenosine in DNA + S-adenosyl-L-homocysteine + H(+). Its function is as follows. An alpha subtype methylase, recognizes the double-stranded sequence 5'-GANTC-3', methylates A-2 on both strands, and protects the DNA from cleavage by the CviBI endonuclease. The sequence is that of Type II methyltransferase M.CviBI from Paramecium bursaria Chlorella virus NC1A (PBCV-NC1A).